Reading from the N-terminus, the 336-residue chain is UDP-3-O-acylglucosamine N-acyltransferase (336 aa).

The active-site Proton acceptor is the histidine 233.

This sequence belongs to the transferase hexapeptide repeat family. LpxD subfamily. In terms of assembly, homotrimer.

The enzyme catalyses a UDP-3-O-[(3R)-3-hydroxyacyl]-alpha-D-glucosamine + a (3R)-hydroxyacyl-[ACP] = a UDP-2-N,3-O-bis[(3R)-3-hydroxyacyl]-alpha-D-glucosamine + holo-[ACP] + H(+). It functions in the pathway bacterial outer membrane biogenesis; LPS lipid A biosynthesis. Catalyzes the N-acylation of UDP-3-O-acylglucosamine using 3-hydroxyacyl-ACP as the acyl donor. Is involved in the biosynthesis of lipid A, a phosphorylated glycolipid that anchors the lipopolysaccharide to the outer membrane of the cell. This Helicobacter pylori (strain J99 / ATCC 700824) (Campylobacter pylori J99) protein is UDP-3-O-acylglucosamine N-acyltransferase.